The chain runs to 450 residues: UDP-N-acetylmuramate--L-alanine ligase (450 aa).

112-118 contacts ATP; it reads GTHGKTT.

It belongs to the MurCDEF family.

The protein localises to the cytoplasm. The enzyme catalyses UDP-N-acetyl-alpha-D-muramate + L-alanine + ATP = UDP-N-acetyl-alpha-D-muramoyl-L-alanine + ADP + phosphate + H(+). It functions in the pathway cell wall biogenesis; peptidoglycan biosynthesis. In terms of biological role, cell wall formation. This chain is UDP-N-acetylmuramate--L-alanine ligase, found in Endomicrobium trichonymphae.